The sequence spans 506 residues: Acetaldehyde dehydrogenase (506 aa).

Active-site residues include Glu262 and Cys301.

It belongs to the aldehyde dehydrogenase family.

It catalyses the reaction acetaldehyde + NAD(+) + H2O = acetate + NADH + 2 H(+). The protein operates within alcohol metabolism; ethanol degradation; acetate from ethanol: step 2/2. Functionally, catalyzes the NAD(+)-dependent oxidation of acetaldehyde to acetate. Is likely a component of the ethanol oxidation system that allows P.aeruginosa to grow on ethanol as the sole carbon and energy source. In Pseudomonas aeruginosa, this protein is Acetaldehyde dehydrogenase.